A 347-amino-acid polypeptide reads, in one-letter code: Photosystem II protein D1 (347 aa).

Helical transmembrane passes span 31–48 (YIGWFGIFMFPLTGLAII), 120–135 (HFIGGVSSWMGREWEF), and 144–158 (WIYLAFSAPLVAATA). H120 is a binding site for chlorophyll a. Pheophytin a is bound at residue W128. Positions 172 and 191 each coordinate [CaMn4O5] cluster. A helical membrane pass occupies residues 199–220 (FHILGVAGVFGGSLFSAMHGSL). H200 provides a ligand contact to chlorophyll a. A quinone contacts are provided by residues H217 and 266–267 (SF). H217 provides a ligand contact to Fe cation. H274 contacts Fe cation. A helical membrane pass occupies residues 276-290 (FLAAWPVIGIWFTAL). Residues H334, E335, and D344 each coordinate [CaMn4O5] cluster.

It belongs to the reaction center PufL/M/PsbA/D family. In terms of assembly, PSII is composed of 1 copy each of membrane proteins PsbA, PsbB, PsbC, PsbD, PsbE, PsbF, PsbH, PsbI, PsbJ, PsbK, PsbL, PsbM, PsbT, PsbX, PsbY, PsbZ, Psb30/Ycf12, at least 3 peripheral proteins of the oxygen-evolving complex and a large number of cofactors. It forms dimeric complexes. The cofactor is The D1/D2 heterodimer binds P680, chlorophylls that are the primary electron donor of PSII, and subsequent electron acceptors. It shares a non-heme iron and each subunit binds pheophytin, quinone, additional chlorophylls, carotenoids and lipids. D1 provides most of the ligands for the Mn4-Ca-O5 cluster of the oxygen-evolving complex (OEC). There is also a Cl(-1) ion associated with D1 and D2, which is required for oxygen evolution. The PSII complex binds additional chlorophylls, carotenoids and specific lipids.. Tyr-163 forms a radical intermediate that is referred to as redox-active TyrZ, YZ or Y-Z.

The protein localises to the plastid. It is found in the chloroplast thylakoid membrane. It catalyses the reaction 2 a plastoquinone + 4 hnu + 2 H2O = 2 a plastoquinol + O2. In terms of biological role, photosystem II (PSII) is a light-driven water:plastoquinone oxidoreductase that uses light energy to abstract electrons from H(2)O, generating O(2) and a proton gradient subsequently used for ATP formation. It consists of a core antenna complex that captures photons, and an electron transfer chain that converts photonic excitation into a charge separation. The D1/D2 (PsbA/PsbD) reaction center heterodimer binds P680, the primary electron donor of PSII as well as several subsequent electron acceptors. In Alexandrium tamarense (Red tide dinoflagellate), this protein is Photosystem II protein D1.